The chain runs to 152 residues: Avidin (152 aa).

Residues 1–24 (MVHATSPLLLLLLLSLALVAPGLS) form the signal peptide. An Avidin-like domain is found at 26–149 (RKCSLTGKWT…GINIFTRLRT (124 aa)). A disulfide bond links Cys-28 and Cys-107. N-linked (GlcNAc...) asparagine glycosylation is present at Asn-41. Tyr-57 serves as a coordination point for biotin.

The protein belongs to the avidin/streptavidin family. Homotetramer. N-linked glycan at Asn-41 consists of GlcNAc(beta1-2)Man(alpha1-3)[GlcNAc(beta1-4)][Man(alpha1-?)Man(alpha1-6)] Man(beta1-4)GlcNAc(beta1-4)GlcNAc. Synthesized in hen oviduct and concentrated in egg white (where it represents 0.05% of the total protein).

It localises to the secreted. Functionally, the biological function of avidin is not known. Forms a strong non-covalent specific complex with biotin (one molecule of biotin per subunit of avidin). This Gallus gallus (Chicken) protein is Avidin (AVD).